The chain runs to 165 residues: Nucleotide-binding protein P9515_05441 (165 aa).

Belongs to the YajQ family.

Nucleotide-binding protein. The protein is Nucleotide-binding protein P9515_05441 of Prochlorococcus marinus (strain MIT 9515).